The sequence spans 330 residues: MDSSFPDWNIEFREQNESYFMESSSCDMSLAMSLLSIIIAIIGLTGNVIVLQLLGFHMHRNAFSVYIFNLSGANFLFLCTHIVFSLENLIRQFHYIDIHMALFSVNVTILAYLAGVSMITAISVEYWLSVLWPTWYHAQRPKHTSTVICTLLWVFSLLLTLWNWIICKVLDYIYNWDMCWKLALIIVVWLLVLFVVLSRSNQALLFRVFCGSQQTPVTRLLVTIMLTALVVLICGFGIGICFFYWKKEENSIMPCGYFYETILLLSGVNSCANPIICLFVGSIKHCQFQCGTLRLILQRAIQESPEEEDEEVEEVVEQEGGEEDEESTTL.

Residues 1-33 (MDSSFPDWNIEFREQNESYFMESSSCDMSLAMS) lie on the Extracellular side of the membrane. N-linked (GlcNAc...) asparagine glycosylation occurs at asparagine 16. The chain crosses the membrane as a helical span at residues 34–54 (LLSIIIAIIGLTGNVIVLQLL). At 55–62 (GFHMHRNA) the chain is on the cytoplasmic side. Residues 63-83 (FSVYIFNLSGANFLFLCTHIV) traverse the membrane as a helical segment. At 84-101 (FSLENLIRQFHYIDIHMA) the chain is on the extracellular side. Residues 102 to 122 (LFSVNVTILAYLAGVSMITAI) form a helical membrane-spanning segment. Residues 123–146 (SVEYWLSVLWPTWYHAQRPKHTST) lie on the Cytoplasmic side of the membrane. A helical transmembrane segment spans residues 147 to 167 (VICTLLWVFSLLLTLWNWIIC). Topologically, residues 168–177 (KVLDYIYNWD) are extracellular. Residues 178 to 198 (MCWKLALIIVVWLLVLFVVLS) form a helical membrane-spanning segment. Over 199–219 (RSNQALLFRVFCGSQQTPVTR) the chain is Cytoplasmic. A helical transmembrane segment spans residues 220–240 (LLVTIMLTALVVLICGFGIGI). The Extracellular portion of the chain corresponds to 241-260 (CFFYWKKEENSIMPCGYFYE). Residues 261-281 (TILLLSGVNSCANPIICLFVG) traverse the membrane as a helical segment. Topologically, residues 282–330 (SIKHCQFQCGTLRLILQRAIQESPEEEDEEVEEVVEQEGGEEDEESTTL) are cytoplasmic. Residues 302–330 (QESPEEEDEEVEEVVEQEGGEEDEESTTL) are disordered. The span at 304-330 (SPEEEDEEVEEVVEQEGGEEDEESTTL) shows a compositional bias: acidic residues.

This sequence belongs to the G-protein coupled receptor 1 family. Mas subfamily.

The protein localises to the membrane. In terms of biological role, orphan receptor. Probably involved in the function of nociceptive neurons. May regulate nociceptor function and/or development, including the sensation or modulation of pain. The sequence is that of Mas-related G-protein coupled receptor member B8 (Mrgprb8) from Mus musculus (Mouse).